A 188-amino-acid chain; its full sequence is Putative manganese efflux pump MntP (188 aa).

A run of 6 helical transmembrane segments spans residues 3-23 (LSAT…ASIG), 41-61 (LIFG…GMLA), 62-82 (SQFI…FLGG), 107-129 (LLVT…LAFL), 143-163 (ATFI…PLLG), and 168-188 (ILGG…HFAG).

This sequence belongs to the MntP (TC 9.B.29) family.

It is found in the cell inner membrane. Its function is as follows. Probably functions as a manganese efflux pump. The polypeptide is Putative manganese efflux pump MntP (Klebsiella pneumoniae subsp. pneumoniae (strain ATCC 700721 / MGH 78578)).